The chain runs to 375 residues: o-succinylbenzoate synthase (375 aa).

The active-site Proton donor is the Lys-166. Mg(2+)-binding residues include Asp-191, Glu-216, and Asp-241. Lys-265 functions as the Proton acceptor in the catalytic mechanism.

The protein belongs to the mandelate racemase/muconate lactonizing enzyme family. MenC type 2 subfamily. Homotetramer. The cofactor is a divalent metal cation.

It catalyses the reaction (1R,6R)-6-hydroxy-2-succinyl-cyclohexa-2,4-diene-1-carboxylate = 2-succinylbenzoate + H2O. The enzyme catalyses N-acetyl-D-methionine = N-acetyl-L-methionine. Its pathway is quinol/quinone metabolism; 1,4-dihydroxy-2-naphthoate biosynthesis; 1,4-dihydroxy-2-naphthoate from chorismate: step 4/7. The protein operates within quinol/quinone metabolism; menaquinone biosynthesis. In terms of biological role, converts 2-succinyl-6-hydroxy-2,4-cyclohexadiene-1-carboxylate (SHCHC) to 2-succinylbenzoate (OSB). Also acts as a N-succinylamino acid racemase (NSAR) that catalyzes the racemization of N-succinyl-D/L-phenylalanine. Can catalyze the racemization of a broad range of N-acylamino acids, including N-acetyl-D-methionine, N-formyl-D/L-methionine, N-formyl-D/L-norleucine, N-formyl-D/L-aminobutyric acid, N-formyl-D/L-norvaline, N-formyl-D/L-homophenylalanine, N-carbamoyl-D-methionine and N-carbamoyl-D-norleucine. May be a bifunctional enzyme involved in menaquinone biosynthesis and in an irreversible pathway for the conversion of D- to L-amino acids, thereby facilitating the survival and/or growth of the organism. The sequence is that of o-succinylbenzoate synthase from Geobacillus stearothermophilus (Bacillus stearothermophilus).